Consider the following 307-residue polypeptide: Plastid division protein PDV2 (307 aa).

Methionine 1 is modified (N-acetylmethionine). Residues 1–213 lie on the Cytoplasmic side of the membrane; that stretch reads MEDEEGIGLI…SGGSSHGVIR (213 aa). A disordered region spans residues 28–66; it reads SSTTVSDNGDGNEDLSPGEGRKSEIIGNQDKDFDSISSE. Residues 46 to 61 show a composition bias toward basic and acidic residues; sequence EGRKSEIIGNQDKDFD. The residue at position 50 (serine 50) is a Phosphoserine. Positions 76-103 form a coiled coil; that stretch reads LLRIRDALEALESQLASLQNLRQRQQYE. Residues 174–206 form a disordered region; it reads HLPSKKKSDANGFGSGHVRNEAEAKSPNGGSGG. A helical transmembrane segment spans residues 214 to 234; that stretch reads FLGSVAKIVLPIIGVISLLSA. At 235 to 307 the chain is on the chloroplast intermembrane side; it reads SGYGPEMRKR…AKRDVTYGYG (73 aa). Residues 235–307 are ARC6 binding; sequence SGYGPEMRKR…AKRDVTYGYG (73 aa).

As to quaternary structure, interacts (via C-terminus) with ARC6 (via C-terminus) in the chloroplast intermembrane space; this interaction induces ARC6 homodimerization and leads to the formation of a heterotetramer containing two ARC6 and two PDV2 subunits. Interacts with ARC5/DRP5B. As to expression, mostly expressed in young leaves.

The protein resides in the plastid. It localises to the chloroplast outer membrane. Its function is as follows. Component of the plastid division machinery consisting in a binary fission accomplished by the simultaneous constriction of the FtsZ ring on the stromal side of the inner envelope membrane, and the ARC5/DRP5B ring on the cytosolic side of the outer envelope membrane. Positive factor of chloroplast division required, with a dosage effect, to mediate the recruitment and dimerization of ARC5/DRP5B at the midplastid constriction site in the cytoplasm at plastid outer envelope membranes (OEMs). Prevents ARC5/DRP5B GTPase acrivity. Relays plastid division site position between stroma and outer surface via interactions with the cytoplasmic ARC5/DRP5B and the inner membrane ARC6 that recruits stromal FtsZ ring. Binding to phosphatidylinositol 4-phosphate (PI4P) modulates negatively chloroplast division. The sequence is that of Plastid division protein PDV2 from Arabidopsis thaliana (Mouse-ear cress).